A 264-amino-acid chain; its full sequence is Ferric siderophore reductase (264 aa).

The FAD-binding FR-type domain maps to Ser-9–Asp-127. FAD is bound by residues Arg-73, Ser-74, Thr-76, Asp-90, Val-92, His-96, Ala-100, Thr-101, Lys-247, Asn-249, Thr-250, and Ala-252.

Belongs to the SIP oxidoreductase family. FAD serves as cofactor.

In terms of biological role, ferric-siderophore reductase involved in iron removal from the siderophores after their transport into the cell. Catalyzes the reduction of the ferric iron bound to the hydroxamate siderophores produced by Shewanella to ferrous iron. Can use a ferredoxin as electron donor. Despite the clear evidence for the interaction with NAD(P)H, no direct reduction of the enzyme by these compounds is observed, nor consumption of NAD(P)H, suggesting that NADH and NADPH are not the physiological electron donors. The chain is Ferric siderophore reductase from Shewanella frigidimarina (strain NCIMB 400).